The following is a 245-amino-acid chain: Probable transcriptional regulatory protein NSE_0641 (245 aa).

The interval 1–22 (MAGHSQYANIKHRKNAQDAKRA) is disordered.

The protein belongs to the TACO1 family.

Its subcellular location is the cytoplasm. The chain is Probable transcriptional regulatory protein NSE_0641 from Neorickettsia sennetsu (strain ATCC VR-367 / Miyayama) (Ehrlichia sennetsu).